The following is a 164-amino-acid chain: TVATILTILASTCMARNVLVNNEGLYAGQSLVVEQYTFIMQDDCNLVLYEYSTPIWASNTGVTGKNGCRAVMQADGNFVVYDVKGRAVWASNSRRGNGNYILVLQKDRNVVIYGSDIWSTGTYRKKVGGTVVMAMNGTVDGGSVVGPVTVNQNVTAVRKVAAAA.

Residues 1-15 form the signal peptide; that stretch reads TVATILTILASTCMA. In terms of domain architecture, Bulb-type lectin spans 16–125; the sequence is RNVLVNNEGL…DIWSTGTYRK (110 aa). A disulfide bond links cysteine 44 and cysteine 68.

In terms of assembly, homotetramer. In terms of processing, not glycosylated.

Functionally, mannose-specific lectin. Induces a Th1-type immune response in vitro. Causes a 4-fold increase in the proliferation of murine thymocytes and a significant increase in the production of nitric oxide at 24 hours in a macrophage cell line. Stimulates the production of the pro-inflammatory cytokines TNF and IL12 by rat peritoneal macrophages in a dose-dependent manner and of the cytokines IFNG and IL2 in murine thymocytes. Has hemagglutination activity towards rabbit erythrocytes. In Allium cepa (Onion), this protein is Lectin.